The sequence spans 433 residues: Enolase (433 aa).

(2R)-2-phosphoglycerate is bound at residue Gln167. Glu209 serves as the catalytic Proton donor. Residues Asp246, Glu291, and Asp318 each contribute to the Mg(2+) site. Lys343, Arg372, Ser373, and Lys394 together coordinate (2R)-2-phosphoglycerate. The active-site Proton acceptor is the Lys343.

Belongs to the enolase family. Component of the RNA degradosome, a multiprotein complex involved in RNA processing and mRNA degradation. Mg(2+) is required as a cofactor.

The protein localises to the cytoplasm. It localises to the secreted. It is found in the cell surface. The catalysed reaction is (2R)-2-phosphoglycerate = phosphoenolpyruvate + H2O. It functions in the pathway carbohydrate degradation; glycolysis; pyruvate from D-glyceraldehyde 3-phosphate: step 4/5. Functionally, catalyzes the reversible conversion of 2-phosphoglycerate (2-PG) into phosphoenolpyruvate (PEP). It is essential for the degradation of carbohydrates via glycolysis. In Edwardsiella ictaluri (strain 93-146), this protein is Enolase.